A 314-amino-acid chain; its full sequence is Glutathione synthetase (314 aa).

One can recognise an ATP-grasp domain in the interval 125–311 (EKLAAQLFPQ…IAGQLFDAIE (187 aa)). 151–208 (FVQKQEQAILKPLDGMGGHSIFRSSNGDPNLNVILETLTDGGRTLAIAQRYLQQIIEG) serves as a coordination point for ATP. Residues Glu-282 and Asn-284 each contribute to the Mg(2+) site.

It belongs to the prokaryotic GSH synthase family. It depends on Mg(2+) as a cofactor. Requires Mn(2+) as cofactor.

The catalysed reaction is gamma-L-glutamyl-L-cysteine + glycine + ATP = glutathione + ADP + phosphate + H(+). It functions in the pathway sulfur metabolism; glutathione biosynthesis; glutathione from L-cysteine and L-glutamate: step 2/2. The polypeptide is Glutathione synthetase (Xylella fastidiosa (strain 9a5c)).